Reading from the N-terminus, the 156-residue chain is Cell division protein SepF (156 aa).

Belongs to the SepF family. As to quaternary structure, homodimer. Interacts with FtsZ.

It localises to the cytoplasm. Its function is as follows. Cell division protein that is part of the divisome complex and is recruited early to the Z-ring. Probably stimulates Z-ring formation, perhaps through the cross-linking of FtsZ protofilaments. Its function overlaps with FtsA. This chain is Cell division protein SepF, found in Ruminiclostridium cellulolyticum (strain ATCC 35319 / DSM 5812 / JCM 6584 / H10) (Clostridium cellulolyticum).